The primary structure comprises 583 residues: Atlastin-2 (583 aa).

The segment at Met1 to Glu44 is disordered. The N-terminal hypervariable region (HVR) stretch occupies residues Met1–Pro60. At Met1–Ala476 the chain is on the cytoplasmic side. Ser24 is subject to Phosphoserine. The GB1/RHD3-type G domain maps to Asp91 to Asn336. The GDP site is built by Arg104, Lys105, Gly106, Lys107, Ser108, Phe109, Gln175, Arg244, and Asp245. Positions 104, 105, 106, 107, 108, and 109 each coordinate GTP. Position 108 (Ser108) interacts with Mg(2+). GTP-binding residues include Arg244 and Asp245. A coiled-coil region spans residues Leu256–Ile284. Lys270 carries the N6-methyllysine modification. GDP is bound by residues Val303 and Asn306. Val303 is a GTP binding site. Positions Met374 to Gly465 are 3HB (three-helix bundle) domain. A linker region spans residues Lys466–Thr474. The helical transmembrane segment at Thr477–Leu497 threads the bilayer. The Lumenal segment spans residues Asn498–Ser499. Residues Ile500–Tyr520 form a helical membrane-spanning segment. Residues Val521 to Asp583 lie on the Cytoplasmic side of the membrane. Residues Lys547–Asp583 form an autoinhibitory domain region.

It belongs to the TRAFAC class dynamin-like GTPase superfamily. GB1/RHD3 GTPase family. GB1 subfamily. As to quaternary structure, monomeric and homodimeric. The homodimer, transiently formed by two molecules on opposing membranes, is the active form mediating ER membrane fusion. Interacts with REEP5 and RTN3; these proteins are involved in endoplasmic reticulum tubular network organization. Interacts with ZFYVE27; both proteins are involved in endoplasmic reticulum tubular network organization. In terms of tissue distribution, expressed in peripheral tissues (at protein level).

Its subcellular location is the endoplasmic reticulum membrane. It carries out the reaction GTP + H2O = GDP + phosphate + H(+). Its activity is regulated as follows. With its alternative C-terminus disrupting the autoinhibitory domain, this brain-specific isoform is probably more active at fusing ER membranes. In terms of biological role, atlastin-2 (ATL2) is a membrane-anchored GTPase that mediates the GTP-dependent fusion of endoplasmic reticulum (ER) membranes, maintaining the continuous ER network. It facilitates the formation of three-way junctions where ER tubules intersect. Two atlastin-2 on neighboring ER tubules bind GTP and form loose homodimers through the GB1/RHD3-type G domains and 3HB regions. Upon GTP hydrolysis, the 3HB regions tighten, pulling the membranes together to drive their fusion. After fusion, the homodimer disassembles upon release of inorganic phosphate (Pi). Subsequently, GDP dissociates, resetting the monomers to a conformation ready for a new fusion cycle. The protein is Atlastin-2 of Homo sapiens (Human).